The following is a 404-amino-acid chain: S-adenosylmethionine synthase (404 aa).

The span at 1–13 (MSQSRYFFTSESV) shows a compositional bias: polar residues. Residues 1–21 (MSQSRYFFTSESVSEGHPDKV) form a disordered region. Position 17 (histidine 17) interacts with ATP. A Mg(2+)-binding site is contributed by aspartate 19. Position 45 (glutamate 45) interacts with K(+). The L-methionine site is built by glutamate 58 and glutamine 101. Positions 101–111 (QSPDINRGVDR) are flexible loop. ATP-binding positions include 172 to 174 (DAK), 245 to 246 (RF), aspartate 254, 260 to 261 (RK), alanine 277, and lysine 281. Residue aspartate 254 participates in L-methionine binding. Residue lysine 285 participates in L-methionine binding.

This sequence belongs to the AdoMet synthase family. As to quaternary structure, homotetramer; dimer of dimers. It depends on Mg(2+) as a cofactor. The cofactor is K(+).

The protein resides in the cytoplasm. The enzyme catalyses L-methionine + ATP + H2O = S-adenosyl-L-methionine + phosphate + diphosphate. Its pathway is amino-acid biosynthesis; S-adenosyl-L-methionine biosynthesis; S-adenosyl-L-methionine from L-methionine: step 1/1. Its function is as follows. Catalyzes the formation of S-adenosylmethionine (AdoMet) from methionine and ATP. The overall synthetic reaction is composed of two sequential steps, AdoMet formation and the subsequent tripolyphosphate hydrolysis which occurs prior to release of AdoMet from the enzyme. The chain is S-adenosylmethionine synthase from Chlorobium phaeobacteroides (strain DSM 266 / SMG 266 / 2430).